The primary structure comprises 421 residues: Cell division protein FtsA (421 aa).

It belongs to the FtsA/MreB family. As to quaternary structure, self-interacts. Interacts with FtsZ.

The protein resides in the cell membrane. In terms of biological role, cell division protein that is involved in the assembly of the Z ring. May serve as a membrane anchor for the Z ring. The polypeptide is Cell division protein FtsA (Buchnera aphidicola subsp. Baizongia pistaciae (strain Bp)).